Here is a 197-residue protein sequence, read N- to C-terminus: UPF0301 protein AnaeK_4073 (197 aa).

It belongs to the UPF0301 (AlgH) family.

The protein is UPF0301 protein AnaeK_4073 of Anaeromyxobacter sp. (strain K).